Here is a 692-residue protein sequence, read N- to C-terminus: Potassium-transporting ATPase ATP-binding subunit (692 aa).

The next 4 membrane-spanning stretches (helical) occupy residues 50–70 (PIMF…FLPS), 77–97 (GWFN…ANFA), 240–260 (LTLI…YLGF), and 266–286 (VLVA…LSAI). Asp-319 functions as the 4-aspartylphosphate intermediate in the catalytic mechanism. Residues Asp-356, Glu-360, 388–395 (FKAETRMS), and Lys-407 each bind ATP. Mg(2+) is bound by residues Asp-530 and Asp-534. 3 helical membrane-spanning segments follow: residues 600 to 620 (FAII…LNIM), 628 to 648 (AILS…PLAM), and 672 to 692 (GGVI…GLFI).

The protein belongs to the cation transport ATPase (P-type) (TC 3.A.3) family. Type IA subfamily. The system is composed of three essential subunits: KdpA, KdpB and KdpC.

It localises to the cell membrane. The enzyme catalyses K(+)(out) + ATP + H2O = K(+)(in) + ADP + phosphate + H(+). Its function is as follows. Part of the high-affinity ATP-driven potassium transport (or Kdp) system, which catalyzes the hydrolysis of ATP coupled with the electrogenic transport of potassium into the cytoplasm. This subunit is responsible for energy coupling to the transport system and for the release of the potassium ions to the cytoplasm. This chain is Potassium-transporting ATPase ATP-binding subunit, found in Bacillus cereus (strain 03BB102).